An 81-amino-acid chain; its full sequence is MNAKVMLVCLLVTMLVMEPAEAGIWSWIKKTAKKVWNSDVAKKLKGKALNVAKDFVAEKIGATPAEAGQIPFDEFMNVLYS.

Positions M1–A22 are cleaved as a signal peptide. The propeptide occupies E66–S81.

It belongs to the non-disulfide-bridged peptide (NDBP) superfamily. Long chain multifunctional peptide (group 2) family. As to expression, expressed by the venom gland.

The protein localises to the secreted. Its subcellular location is the target cell membrane. Its function is as follows. At high concentrations, acts as a pore former in cellular membranes and causes the leakage of the cells. At submicromolar concentrations, degranulates granulocytes and has a weak hemolytic activity against human erythrocytes. Also strongly inhibits the production of superoxide anions. Has a strong antibacterial activity against Gram-negative bacteria but is less active against Gram-positive bacteria. Also has antifungal activity. In Urodacus yaschenkoi (Inland robust scorpion), this protein is Antimicrobial peptide Con22.